Here is a 174-residue protein sequence, read N- to C-terminus: MKKQQRLVMRTVILLLLLAALGYTIYANFFTEKTAVAVGSTAPDFVLSDLEGREHRLTDYRGKGVFLNFWGTWCKPCEREMPYMNELYPIYQKQGVEILAVNVGEPKLNVEKFAERFGLTFPIVIDRQDQVLNAYGVGPLPTTFLIDKNGKVKKIITGTMTKEDIKQHLESIKP.

Residues 11–30 form a helical; Signal-anchor for type II membrane protein membrane-spanning segment; sequence TVILLLLLAALGYTIYANFF. Residues 36-174 enclose the Thioredoxin domain; it reads VAVGSTAPDF…IKQHLESIKP (139 aa). C74 and C77 form a disulfide bridge.

It belongs to the thioredoxin family. ResA subfamily.

It localises to the cell membrane. It participates in protein modification; cytochrome c assembly. In terms of biological role, thiol-disulfide oxidoreductase which is required in disulfide reduction during c-type cytochrome synthesis. May accept reducing equivalents from CcdA, leading to breakage of disulfide bonds in apocytochrome c; following this reduction heme can be covalently attached. The polypeptide is Thiol-disulfide oxidoreductase ResA (Geobacillus thermodenitrificans (strain NG80-2)).